The following is a 243-amino-acid chain: Small ribosomal subunit protein uS3 (243 aa).

The region spanning 39–107 (MRKFVMSELK…ETHLNIVEVR (69 aa)) is the KH type-2 domain. The tract at residues 214–243 (ASERRAMEGDAQGPASRDRDRDRDRRRDNA) is disordered. The segment covering 229-243 (SRDRDRDRDRRRDNA) has biased composition (basic and acidic residues).

Belongs to the universal ribosomal protein uS3 family. As to quaternary structure, part of the 30S ribosomal subunit. Forms a tight complex with proteins S10 and S14.

Its function is as follows. Binds the lower part of the 30S subunit head. Binds mRNA in the 70S ribosome, positioning it for translation. This Rhizobium leguminosarum bv. trifolii (strain WSM2304) protein is Small ribosomal subunit protein uS3.